We begin with the raw amino-acid sequence, 490 residues long: (21S)-21-acetyl-1-hydroxy-apo-melianone synthase CYP88A164 (490 aa).

A helical membrane pass occupies residues 4–24 (DLLWLILAIVVGTYVVLFGFL). Residue Cys438 participates in heme binding.

Belongs to the cytochrome P450 family. The cofactor is heme. In terms of tissue distribution, mainly expressed in petioles and, to a lower extent, in roots.

It is found in the membrane. It catalyses the reaction (21S)-21-acetoxyl-apo-melianone + reduced [NADPH--hemoprotein reductase] + O2 = (21S)-21-acetyl-1-hydroxy-apo-melianone + oxidized [NADPH--hemoprotein reductase] + H2O + H(+). It functions in the pathway secondary metabolite biosynthesis; terpenoid biosynthesis. Its function is as follows. Monooxygenase involved in the biosynthesis of limonoids triterpene natural products such as azadirachtin, an antifeedant widely used as bioinsecticide, and possessing many medicinal applications including anti-tumoral, anti-malarial, anti-rheumatic, antibacterial, anti-inflammatory, anti-pyretic and diuretic effects. Catalyzes the conversion of (21S)-21-acetoxyl-apo-melianone to (21S)-21-acetyl-1-hydroxy-apo-melianone. The polypeptide is (21S)-21-acetyl-1-hydroxy-apo-melianone synthase CYP88A164 (Melia azedarach (Chinaberry tree)).